A 218-amino-acid chain; its full sequence is Small ribosomal subunit protein uS3 (218 aa).

Positions 38-107 (VREYIEKRLK…RVHVNVVEVK (70 aa)) constitute a KH type-2 domain.

This sequence belongs to the universal ribosomal protein uS3 family. As to quaternary structure, part of the 30S ribosomal subunit. Forms a tight complex with proteins S10 and S14.

Binds the lower part of the 30S subunit head. Binds mRNA in the 70S ribosome, positioning it for translation. This is Small ribosomal subunit protein uS3 from Exiguobacterium sibiricum (strain DSM 17290 / CCUG 55495 / CIP 109462 / JCM 13490 / 255-15).